A 473-amino-acid chain; its full sequence is Arginine biosynthesis bifunctional protein ArgJ, mitochondrial (473 aa).

Substrate is bound by residues Thr201, Lys230, Thr241, Glu328, Asn468, and Thr473. Thr241 acts as the Nucleophile in catalysis.

The protein belongs to the ArgJ family. In terms of assembly, heterodimer of an alpha and a beta chain. Post-translationally, the alpha and beta chains are autoproteolytically processed from a single precursor protein within the mitochondrion.

Its subcellular location is the mitochondrion matrix. It catalyses the reaction N(2)-acetyl-L-ornithine + L-glutamate = N-acetyl-L-glutamate + L-ornithine. The enzyme catalyses L-glutamate + acetyl-CoA = N-acetyl-L-glutamate + CoA + H(+). Its pathway is amino-acid biosynthesis; L-arginine biosynthesis; L-ornithine and N-acetyl-L-glutamate from L-glutamate and N(2)-acetyl-L-ornithine (cyclic): step 1/1. The protein operates within amino-acid biosynthesis; L-arginine biosynthesis; N(2)-acetyl-L-ornithine from L-glutamate: step 1/4. Catalyzes two activities which are involved in the cyclic version of arginine biosynthesis: the synthesis of acetylglutamate from glutamate and acetyl-CoA, and of ornithine by transacetylation between acetylornithine and glutamate. The sequence is that of Arginine biosynthesis bifunctional protein ArgJ, mitochondrial from Ajellomyces capsulatus (strain H143) (Darling's disease fungus).